A 92-amino-acid chain; its full sequence is Small ribosomal subunit protein uS19 (92 aa).

The protein belongs to the universal ribosomal protein uS19 family.

Its function is as follows. Protein S19 forms a complex with S13 that binds strongly to the 16S ribosomal RNA. The polypeptide is Small ribosomal subunit protein uS19 (Anoxybacillus flavithermus (strain DSM 21510 / WK1)).